Consider the following 295-residue polypeptide: MMMEEKLVINELELGKELANRLMNNLKHTSSVDSNKTLISDILRIYQNAIFMLSFNQDKNILKRSLEIDGKDSKNVFKKRKVSEKNTEKVKVFVATEQENGSIDDGHCWRKYGQKEIHGSKNPRAYYRCTHRFTQDCLAVKQVQKSDTDPSLFEVKYLGNHTCNNITSPKTTTNFSVSLTNTNIFEGNRVHVTEQSEDMKPTKSEEVMISLEDLENKKNIFRTFSFSNHEIENGVWKSNLFLGNFVEDLSPATSGSAITSEVLSAPAAVENSETADSYFSSLDNIIDFGQDWLWS.

The segment at residues 98-166 is a DNA-binding region (WRKY); it reads QENGSIDDGH…YLGNHTCNNI (69 aa).

It belongs to the WRKY group III family. In terms of assembly, binds to BZR2/BES1 to cooperatively regulate the expression of target genes. Post-translationally, phosphorylated and destabilized by ASK7/BIN2. In terms of tissue distribution, expressed in guard cells, hypocotyls, and in the vascular tissues of cotyledon and root. Mostly expressed in roots, at lower levels in leaves and petioles, and, to a lower extent, in stems, flowers and siliques.

The protein resides in the nucleus. Functionally, transcription factor involved in the regulation of osmotic stress responses and stomatal movement. Interacts specifically with the W box (5'-(T)TGAC[CT]-3'), a frequently occurring elicitor-responsive cis-acting element. Positive regulator of EDS1-dependent defense against E.amylovora. Together with WRKY70 and WRKY53, promotes resistance to P.syringae, probably by enhancing salicylic acid (SA)- dependent genes. Contributes to the suppression of jasmonic acid (MeJA)-induced expression of PDF1.2. Together with WRKY54 and WRKY70, promotes brassinosteroid (BR)-regulated plant growth but prevent drought response by modulating gene expression. This is Probable WRKY transcription factor 46 (WRKY46) from Arabidopsis thaliana (Mouse-ear cress).